We begin with the raw amino-acid sequence, 600 residues long: Tripeptidyl-peptidase 1 (600 aa).

The N-terminal stretch at 1-22 is a signal peptide; sequence MNIKFNLIIIILFILFISNVNC. A propeptide spans 23–220 (removed in mature form); the sequence is KKIKNKKHLT…GGGGKVNGIG (198 aa). N-linked (GlcNAc...) asparagine glycosylation is found at Asn91, Asn259, and Asn266. Residues 248-600 form the Peptidase S53 domain; the sequence is YLSPDLIRKE…FDELVKYCLE (353 aa). Residues Glu318 and Asp322 each act as charge relay system in the active site. Residues Cys411 and Cys570 are joined by a disulfide bond. Asn475 and Asn483 each carry an N-linked (GlcNAc...) asparagine glycan. Ser514 (charge relay system) is an active-site residue. Ca(2+)-binding residues include Asp559, Ile560, Gly579, and Asp581.

As to quaternary structure, monomer. Ca(2+) serves as cofactor. In terms of processing, activated by autocatalytic proteolytical processing upon acidification. N-glycosylation is required for processing and activity.

The protein resides in the secreted. It carries out the reaction Release of an N-terminal tripeptide from a polypeptide, but also has endopeptidase activity.. Serine protease with tripeptidyl-peptidase I activity. The sequence is that of Tripeptidyl-peptidase 1 (tpp1) from Dictyostelium discoideum (Social amoeba).